Here is a 142-residue protein sequence, read N- to C-terminus: Transcription antitermination protein NusB (142 aa).

The protein belongs to the NusB family.

Functionally, involved in transcription antitermination. Required for transcription of ribosomal RNA (rRNA) genes. Binds specifically to the boxA antiterminator sequence of the ribosomal RNA (rrn) operons. The sequence is that of Transcription antitermination protein NusB from Thermotoga sp. (strain RQ2).